The primary structure comprises 108 residues: ATP synthase peripheral stalk subunit F6, mitochondrial (108 aa).

Residues 1–32 (MILQRLFRFSSIIRSAVSVHFRRNIGVTAVAF) constitute a mitochondrion transit peptide. Residues Lys41, Lys46, and Lys79 each carry the N6-acetyllysine modification. Lys84, Lys94, and Lys99 each carry N6-acetyllysine; alternate. Lys84, Lys94, and Lys99 each carry N6-succinyllysine; alternate. Lys105 is modified (N6-acetyllysine).

The protein belongs to the eukaryotic ATPase subunit F6 family. As to quaternary structure, component of the ATP synthase complex composed at least of ATP5F1A/subunit alpha, ATP5F1B/subunit beta, ATP5MC1/subunit c (homooctomer), MT-ATP6/subunit a, MT-ATP8/subunit 8, ATP5ME/subunit e, ATP5MF/subunit f, ATP5MG/subunit g, ATP5MK/subunit k, ATP5MJ/subunit j, ATP5F1C/subunit gamma, ATP5F1D/subunit delta, ATP5F1E/subunit epsilon, ATP5PF/subunit F6, ATP5PB/subunit b, ATP5PD/subunit d, ATP5PO/subunit OSCP. ATP synthase complex consists of a soluble F(1) head domain (subunits alpha(3) and beta(3)) - the catalytic core - and a membrane F(0) domain - the membrane proton channel (subunits c, a, 8, e, f, g, k and j). These two domains are linked by a central stalk (subunits gamma, delta, and epsilon) rotating inside the F1 region and a stationary peripheral stalk (subunits F6, b, d, and OSCP).

The protein localises to the mitochondrion. Its subcellular location is the mitochondrion inner membrane. Its function is as follows. Subunit F6, of the mitochondrial membrane ATP synthase complex (F(1)F(0) ATP synthase or Complex V) that produces ATP from ADP in the presence of a proton gradient across the membrane which is generated by electron transport complexes of the respiratory chain. ATP synthase complex consist of a soluble F(1) head domain - the catalytic core - and a membrane F(1) domain - the membrane proton channel. These two domains are linked by a central stalk rotating inside the F(1) region and a stationary peripheral stalk. During catalysis, ATP synthesis in the catalytic domain of F(1) is coupled via a rotary mechanism of the central stalk subunits to proton translocation. In vivo, can only synthesize ATP although its ATP hydrolase activity can be activated artificially in vitro. Part of the complex F(0) domain. Part of the complex F(0) domain and the peripheric stalk, which acts as a stator to hold the catalytic alpha(3)beta(3) subcomplex and subunit a/ATP6 static relative to the rotary elements. This chain is ATP synthase peripheral stalk subunit F6, mitochondrial, found in Macaca fascicularis (Crab-eating macaque).